The following is a 329-amino-acid chain: DNA-directed RNA polymerase subunit alpha (329 aa).

An alpha N-terminal domain (alpha-NTD) region spans residues 1 to 235; the sequence is MQGSVTEFLK…EQLDAFVDLR (235 aa). The tract at residues 249–329 is alpha C-terminal domain (alpha-CTD); the sequence is FDPILLRPVD…NWPPASIAED (81 aa).

The protein belongs to the RNA polymerase alpha chain family. In terms of assembly, homodimer. The RNAP catalytic core consists of 2 alpha, 1 beta, 1 beta' and 1 omega subunit. When a sigma factor is associated with the core the holoenzyme is formed, which can initiate transcription.

The enzyme catalyses RNA(n) + a ribonucleoside 5'-triphosphate = RNA(n+1) + diphosphate. Functionally, DNA-dependent RNA polymerase catalyzes the transcription of DNA into RNA using the four ribonucleoside triphosphates as substrates. In Aliivibrio salmonicida (strain LFI1238) (Vibrio salmonicida (strain LFI1238)), this protein is DNA-directed RNA polymerase subunit alpha.